The chain runs to 166 residues: Large ribosomal subunit protein uL10 (166 aa).

It belongs to the universal ribosomal protein uL10 family. In terms of assembly, part of the ribosomal stalk of the 50S ribosomal subunit. The N-terminus interacts with L11 and the large rRNA to form the base of the stalk. The C-terminus forms an elongated spine to which L12 dimers bind in a sequential fashion forming a multimeric L10(L12)X complex.

Forms part of the ribosomal stalk, playing a central role in the interaction of the ribosome with GTP-bound translation factors. The polypeptide is Large ribosomal subunit protein uL10 (Hydrogenovibrio crunogenus (strain DSM 25203 / XCL-2) (Thiomicrospira crunogena)).